We begin with the raw amino-acid sequence, 601 residues long: MAYDDSVKKEDCFDGDHTFEDIGLAAGRSQREKKRSYKDFLREEEEIAAQVRNSSKKKLKDSELYFLGTDTHKKKRKHSSDDYYYGDISSLESSQKKKKKSSPQSTDTAMDLLKAITSPLAAGSKPSKKTGEKSSGSSSHSESKKEHHRKKVSGSSGELPLEDGGSHKSKKMKPLYVNTETLTLREPDGLKMKLILSPKEKGSSSVDEESFQYPSQQATVKKSSKKSARDEQGALLLGHELQSFLKTARKKHKSSSDAHSSPGPEGCGSDASQFAESHSANLDLSGLEPILVESDSSSGGELEAGELVIDDSYREIKKKKKSKKSKKKKDKEKHKEKRHSKSKRSLGLSAVPVGEVTVTSGPPPSIPYAGAAAPPLPLPGLHTDGHSEKKKKKEEKDKERERGEKPKKKNMSAYQVFCKEYRVTIVADHPGIDFGELSKKLAEVWKQLPEKDKLIWKQKAQYLQHKQNKAEATTVKRKASSSEGSMKVKASSVGVLSPQKKSPPTTMLLPASPAKAPETEPIDVAAHLQLLGESLSLIGHRLQETEGMVAVSGSLSVLLDSIICALGPLACLTTQLPELNGCPKQVLSNTLDNIAYIMPGL.

Lys-8 participates in a covalent cross-link: Glycyl lysine isopeptide (Lys-Gly) (interchain with G-Cter in SUMO2). Disordered stretches follow at residues 51–410 (VRNS…KKKN) and 473–514 (TTVK…ASPA). A compositionally biased stretch (low complexity) spans 82–93 (DYYYGDISSLES). At Ser-102 the chain carries Phosphoserine. Residue Lys-191 forms a Glycyl lysine isopeptide (Lys-Gly) (interchain with G-Cter in SUMO2) linkage. Position 197 is a phosphoserine (Ser-197). Polar residues-rich tracts occupy residues 212–221 (QYPSQQATVK) and 270–282 (DASQ…SANL). A compositionally biased stretch (basic residues) spans 316–344 (IKKKKKSKKSKKKKDKEKHKEKRHSKSKR). Residues 394 to 404 (EEKDKERERGE) are compositionally biased toward basic and acidic residues. The HMG box DNA-binding region spans 407 to 475 (KKKNMSAYQV…KQNKAEATTV (69 aa)). Phosphoserine is present on residues Ser-497, Ser-502, and Ser-512.

Its subcellular location is the nucleus. In terms of biological role, negatively regulates Wnt/beta-catenin signaling during development. This Homo sapiens (Human) protein is HMG domain-containing protein 4 (HMGXB4).